The following is a 220-amino-acid chain: Response regulator protein TmoT (220 aa).

The Response regulatory domain occupies 21–135 (VIYIVDDDNA…DLLGAIRTAL (115 aa)). Asp-70 is modified (4-aspartylphosphate). Residues 151 to 216 (LKASYESLSK…DLVRVTERLK (66 aa)) enclose the HTH luxR-type domain. A DNA-binding region (H-T-H motif) is located at residues 175-194 (NKQTALELDISEATVKVHRH).

Phosphorylated by TmoS.

It localises to the cytoplasm. In terms of biological role, member of the two-component regulatory system TmoS/TmoT involved in the regulation of toluene degradation. Induces expression of tmoX operon. The protein is Response regulator protein TmoT (tmoT) of Ectopseudomonas mendocina (Pseudomonas mendocina).